The sequence spans 124 residues: MAQHAFQDQEQEEGRNSRQQKRKSFEDTMKPKAVELTITETLWDQVLMAFKDIQNELQEDARTRGMSSVTPTSSASKIGTKTSDAATTPKLGRLLSGTGEQPSGIQAQNLRGQSSDQSACYPQP.

2 disordered regions span residues 1–31 (MAQH…TMKP) and 59–124 (EDAR…YPQP). Polar residues-rich tracts occupy residues 65 to 86 (GMSS…SDAA) and 98 to 124 (TGEQ…YPQP).

This is an uncharacterized protein from Bos taurus (Bovine).